The sequence spans 437 residues: GTPase Obg (437 aa).

The Obg domain maps to 2-160; sequence SMFLDTAKIS…RQLELELKIL (159 aa). The OBG-type G domain occupies 161 to 338; it reads ADVGLVGFPS…LLEATAELLA (178 aa). GTP contacts are provided by residues 167–174, 192–196, 214–217, 284–287, and 319–321; these read GFPSVGKS, FTTIV, DLPG, NKMD, and SSL. Mg(2+) is bound by residues S174 and T194. Residues 359 to 437 enclose the OCT domain; sequence GFAEAEKDFE…IGKFEFEFVD (79 aa).

The protein belongs to the TRAFAC class OBG-HflX-like GTPase superfamily. OBG GTPase family. In terms of assembly, monomer. It depends on Mg(2+) as a cofactor.

It localises to the cytoplasm. Functionally, an essential GTPase which binds GTP, GDP and possibly (p)ppGpp with moderate affinity, with high nucleotide exchange rates and a fairly low GTP hydrolysis rate. Plays a role in control of the cell cycle, stress response, ribosome biogenesis and in those bacteria that undergo differentiation, in morphogenesis control. This chain is GTPase Obg, found in Streptococcus pyogenes serotype M18 (strain MGAS8232).